Reading from the N-terminus, the 360-residue chain is DNA replication and repair protein RecF (360 aa).

Gly-33–Thr-40 is an ATP binding site.

This sequence belongs to the RecF family.

It localises to the cytoplasm. In terms of biological role, the RecF protein is involved in DNA metabolism; it is required for DNA replication and normal SOS inducibility. RecF binds preferentially to single-stranded, linear DNA. It also seems to bind ATP. The chain is DNA replication and repair protein RecF from Rickettsia akari (strain Hartford).